We begin with the raw amino-acid sequence, 793 residues long: Putative dipeptidyl aminopeptidase C2E11.08 (793 aa).

At 1–24 the chain is on the cytoplasmic side; sequence MNDFSFEDKGLISRSGFGSRHVRR. Residues 25–45 traverse the membrane as a helical; Signal-anchor for type II membrane protein segment; it reads VVKALALIFSLLILYLTISNV. The Lumenal portion of the chain corresponds to 46–793; the sequence is SDSPPKRDSL…STGVRQHRWD (748 aa). Residues Asn-101, Asn-136, Asn-246, Asn-299, Asn-303, Asn-324, Asn-336, Asn-377, Asn-384, Asn-407, and Asn-535 are each glycosylated (N-linked (GlcNAc...) asparagine). Residues Ser-647, Asp-722, and His-755 each act as charge relay system in the active site. Asn-761 is a glycosylation site (N-linked (GlcNAc...) asparagine).

It belongs to the peptidase S9B family.

It localises to the vacuole membrane. This Schizosaccharomyces pombe (strain 972 / ATCC 24843) (Fission yeast) protein is Putative dipeptidyl aminopeptidase C2E11.08.